Consider the following 59-residue polypeptide: Small ribosomal subunit protein bS21 (59 aa).

The disordered stretch occupies residues 35 to 59 (REHYEKPSVKKKKKSEAAKRKKRNF). Over residues 43–59 (VKKKKKSEAAKRKKRNF) the composition is skewed to basic residues.

It belongs to the bacterial ribosomal protein bS21 family.

The polypeptide is Small ribosomal subunit protein bS21 (Finegoldia magna (strain ATCC 29328 / DSM 20472 / WAL 2508) (Peptostreptococcus magnus)).